A 383-amino-acid chain; its full sequence is S-adenosylmethionine synthase (383 aa).

His-22 contributes to the ATP binding site. Asp-24 contributes to the Mg(2+) binding site. Residue Glu-50 participates in K(+) binding. Residues Glu-63 and Gln-99 each contribute to the L-methionine site. Residues 99–109 (QSLEINQAVLK) are flexible loop. Residues 160-162 (DMK), Asp-235, 241-242 (RK), Ser-258, and Lys-262 contribute to the ATP site. Asp-235 serves as a coordination point for L-methionine. L-methionine is bound at residue Lys-266.

This sequence belongs to the AdoMet synthase family. In terms of assembly, homotetramer; dimer of dimers. The cofactor is Mg(2+). K(+) serves as cofactor.

The protein localises to the cytoplasm. The catalysed reaction is L-methionine + ATP + H2O = S-adenosyl-L-methionine + phosphate + diphosphate. It functions in the pathway amino-acid biosynthesis; S-adenosyl-L-methionine biosynthesis; S-adenosyl-L-methionine from L-methionine: step 1/1. Functionally, catalyzes the formation of S-adenosylmethionine (AdoMet) from methionine and ATP. The overall synthetic reaction is composed of two sequential steps, AdoMet formation and the subsequent tripolyphosphate hydrolysis which occurs prior to release of AdoMet from the enzyme. This chain is S-adenosylmethionine synthase, found in Mycoplasma genitalium (strain ATCC 33530 / DSM 19775 / NCTC 10195 / G37) (Mycoplasmoides genitalium).